Consider the following 126-residue polypeptide: MAPGEVTITVRLIRSFEHRNFKPVVYHGVNLDQTVKEFIVFLKQDIPLRTNLPPPFRNYKYDALKIIHQAHKSKTNELVLSLEDDERLLLKEDSTLKAAGIASETEIAFFCEEDYKNYKANPISSW.

This sequence belongs to the UPF0538 family.

In Homo sapiens (Human), this protein is UPF0538 protein C2orf76 (C2orf76).